A 379-amino-acid chain; its full sequence is Stimulator of interferon genes protein (379 aa).

The Cytoplasmic portion of the chain corresponds to Met-1 to Gly-17. The mediates interaction with ZDHHC1 and ZDHHC11 stretch occupies residues Met-1–Leu-190. Residues Ala-18–Trp-34 traverse the membrane as a helical segment. Lys-20 is covalently cross-linked (Glycyl lysine isopeptide (Lys-Gly) (interchain with G-Cter in ubiquitin)). Topologically, residues Gly-35–Leu-44 are lumenal. A helical membrane pass occupies residues Arg-45–Glu-69. The Cytoplasmic portion of the chain corresponds to Leu-70–Cys-91. 2 S-palmitoyl cysteine lipidation sites follow: Cys-88 and Cys-91. A helical membrane pass occupies residues Pro-92–Tyr-106. At Tyr-107–Pro-116 the chain is on the lumenal side. Residues Phe-117–Leu-134 form a helical membrane-spanning segment. At Gly-135–Ser-379 the chain is on the cytoplasmic side. Residue Lys-150 forms a Glycyl lysine isopeptide (Lys-Gly) (interchain with G-Cter in ubiquitin) linkage. Residues Phe-153–Glu-340 are cyclic dinucleotide-binding domain (CBD). 2',3'-cGAMP-binding residues include Ser-162 and Tyr-167. Residues Ser-162 and Tyr-167 each coordinate 3',3'-c-di-GMP. A 2',3'-cUAMP-binding site is contributed by Tyr-167. At Thr-229 the chain carries Phosphothreonine. Lys-236 participates in a covalent cross-link: Glycyl lysine isopeptide (Lys-Gly) (interchain with G-Cter in ubiquitin). A 2',3'-cGAMP-binding site is contributed by Arg-238. A 2',3'-cUAMP-binding site is contributed by Arg-238. 3',3'-c-di-GMP contacts are provided by residues Arg-238–Ser-241 and Thr-263. Ser-241 carries the post-translational modification Phosphoserine. A 2',3'-cGAMP-binding site is contributed by Thr-263. Residue Thr-263 participates in 2',3'-cUAMP binding. Residue Lys-338 forms a Glycyl lysine isopeptide (Lys-Gly) (interchain with G-Cter in SUMO) linkage. Positions Glu-340–Ser-379 are C-terminal tail (CTT). Residues Val-341–Lys-370 form a disordered region. The segment covering Ser-345–Gln-359 has biased composition (polar residues). Thr-354 is modified (phosphothreonine). Position 355 is a phosphoserine; by MAP3K7 (Ser-355). Phosphothreonine is present on Thr-356. A phosphoserine; by TBK1 mark is found at Ser-358 and Ser-366. The pLxIS motif motif lies at Leu-363–Ser-366.

It belongs to the STING family. In terms of assembly, homodimer; forms a homodimer in absence of cyclic nucleotide (c-di-GMP or cGAMP); 'Lys-63'-linked ubiquitination at Lys-150 is required for homodimerization. Homotetramer; in presence of cyclic nucleotide (c-di-GMP or cGAMP), forms tetramers and higher-order oligomers through side-by-side packing. Interacts (when phosphorylated) with IRF3; following activation and phosphorylation on the pLxIS motif by TBK1, recruits IRF3. Interacts with RIGI, MAVS and SSR2. Interacts with RNF5 and TRIM56. Interacts with TBK1; when homodimer, leading to subsequent production of IFN-beta. Interacts with IFIT1 and IFIT2. Interacts with TRIM29; this interaction induces STING1 ubiquitination and subsequent degradation. Associates with the MHC-II complex. Interacts with STEEP1; interaction takes place upon cGAMP-activation and STING1 phosphorylation by MAP3K7/TAK1 and promotes STING1 translocation to COPII vesicles. Interacts with SEC24A, SEC24B, and SEC24C; promoting translocation to COPII vesicles. Interacts (when ubiquitinated) with SQSTM1; leading to relocalization to autophagosomes. Interacts with SURF4. Interacts with HNRNPA2B1. Interacts with ZDHHC1; ZDHHC1 constitutively interacts with STING1 and in presence of DNA viruses activates it by promoting its cGAMP-induced oligomerization and the recruitment of downstream signaling components. Interacts with ZDHHC11; in presence of DNA viruses promotes the recruitment of IRF3 to STING1. Interacts with TOMM70. Interacts with isoform IFI16-beta of IFI16. Interacts with TAB1; promoting recruitment of TAB1 to the endoplasmic reticulum membrane and subsequent activation of MAP3K7/TAK1. Interacts (via transmembrane domain) with TMEM203. Interacts with DDX41. Interacts with TMEM120A (via C-terminal domain); regulates the trafficking of STING1 from the ER to the ER-Golgi intermediate compartment to elicit antiviral effects. (Microbial infection) Interacts with human papillomavirus (HPV) protein E7. As to quaternary structure, (Microbial infection) Interacts with adenovirus early E1A protein. In terms of assembly, (Microbial infection) Interacts with herpes simplex virus 1 protein ICP34.5; this interaction inhibits the intracellular DNA sensing pathway. (Microbial infection) Interacts with Chikungunya virus non-structural protein 1; this interaction results in inhibition of cGAS-STING signaling and increased levels of palmitoylated nsP1 and protein stabilization. As to quaternary structure, (Microbial infection) Interacts with human cytomegalovirus proteins UL94, UL42 and UL138; these interactions result in the inhibition of cGAS-STING signaling. In terms of assembly, (Microbial infection) Interacts with varivella virus protein 39; this interaction results in the inhibition of cGAS-STING signaling. In terms of processing, phosphorylation by TBK1 leads to activation and production of IFN-beta. Following cyclic nucleotide (c-di-GMP or cGAMP)-binding, activation and translocation from the endoplasmic reticulum, STING1 is phosphorylated by TBK1 at Ser-366 in the pLxIS motif. The phosphorylated pLxIS motif constitutes an IRF3-binding motif, leading to recruitment of the transcription factor IRF3 to induce type-I interferons and other cytokines. The phosphorylated pLxIS motif facilitates SENP2 recruitment during late phase of viral infection. Phosphorylated on tyrosine residues upon MHC-II aggregation. Dephosphorylation by PPP6C leads to inactivation and decreased production of IFN-beta. Phosphorylation at Ser-358 is also required to activate IRF3. Phosphorylation at Ser-355 by MAP3K7/TAK1 facilitates its interaction with STEEP1, promoting STING1 translocation to COPII vesicles. Post-translationally, ubiquitinated. Ubiquitinated via 'Lys-63'-linked ubiquitin chains in response to double-stranded DNA treatment, leading to relocalization to autophagosomes and subsequent degradation; this process is dependent on SQSTM1. 'Lys-63'-linked ubiquitination mediated by TRIM56 at Lys-150 promotes homodimerization and recruitment of the antiviral kinase TBK1 and subsequent production of IFN-beta. 'Lys-48'-linked polyubiquitination at Lys-150 occurring after viral infection is mediated by RNF5 and leads to proteasomal degradation. 'Lys-11'-linked polyubiquitination at Lys-150 by RNF26 leads to stabilize STING1: it protects STING1 from RNF5-mediated 'Lys-48'-linked polyubiquitination. 'Lys-33'-linked and 'Lys-48'-linked deubiquitinated by USP20; leading to its stabilization and promotion of innate antiviral response. 'Lys-48'-linked deubiquitinated by USP44; leading to its stabilization and promotion of innate antiviral response. Deubiquitinated by USP13; leading to inhibition of innate antiviral response. 'Lys-63'-linked deubiquitinated by USP49; leading to inhibition of the subsequent recruitment of TBK1 to the signaling complex. 'Lys-63'-linked ubiquitination mediated by RNF39 promotes the activation of the cGAS-STING pathway. MARCHF5-mediated ubiquitination prevents the oxidation-induced polymer formation. (Microbial infection) Deubiquitinated by Epstein-Barr virus BPLF1 on both 'Lys-48' and 'Lys-63'-linked ubiquitin chains; leading to inhibition of cGAS-STING signaling. In terms of processing, sumoylated at Lys-338 by TRIM38 during the early phase of viral infection, promoting its stability by preventing its relocalization to autophagosomes and subsequent degradation. Desumoylated by SENP2 during the late phase of viral infection. Post-translationally, palmitoylation takes place in the Golgi apparatus and creates a platform for the recruitment of TBK1. In terms of tissue distribution, ubiquitously expressed. Expressed in skin endothelial cells, alveolar type 2 pneumocytes, bronchial epithelium and alveolar macrophages.

Its subcellular location is the endoplasmic reticulum membrane. The protein resides in the cytoplasm. It is found in the perinuclear region. It localises to the endoplasmic reticulum-Golgi intermediate compartment membrane. The protein localises to the golgi apparatus membrane. Its subcellular location is the cytoplasmic vesicle. The protein resides in the autophagosome membrane. It is found in the mitochondrion outer membrane. It localises to the cell membrane. It carries out the reaction H(+)(in) = H(+)(out). Its activity is regulated as follows. Activated upon binding to the hydrolysis-resistant 2'3'-cG(s)A(s)MP, an analog of cGAMP, in which phosphodiester linkages are replaced by phosphothioate linkages. Specifically inhibited by small-molecule H-151 (N-(4-ethylphenyl)-N'-1H-indol-3-yl-urea), which covalently binds Cys-91 and prevents palmitoylation and subsequent activation of STING1. In contrast to mouse protein, not activated by anticancer molecule 5,6-dimethylxanthenone 4-acetic acid (DMXAA). Inhibited by compound 18 ([(3S,4S)-2-(4-tert-butyl-3-chlorophenyl)-3-(2,3-dihydro-1,4-benzodioxin-6-yl)-7-fluoro-1-oxo-1,2,3,4-tetrahydroisoquinolin-4-yl]acetate), a competitive inhibitor with slow dissociation kinetics and good oral bioavailability. Homooligomerization and ability to promote the production of type I interferons is activated by C53, a small benzothiazinone-like compound that binds to the transmembrane regions. in the area of the putative pore. In contrast, compound C53, directly inhibits the proton channel activity and facilitate MAP1LC3B/LC3B lipidation and autophagosome formation. Its function is as follows. Facilitator of innate immune signaling that acts as a sensor of cytosolic DNA from bacteria and viruses and promotes the production of type I interferon (IFN-alpha and IFN-beta). Innate immune response is triggered in response to non-CpG double-stranded DNA from viruses and bacteria delivered to the cytoplasm. Acts by binding cyclic dinucleotides: recognizes and binds cyclic di-GMP (c-di-GMP), a second messenger produced by bacteria, cyclic UMP-AMP (2',3'-cUAMP), and cyclic GMP-AMP (cGAMP), a messenger produced by CGAS in response to DNA virus in the cytosol. Upon binding to c-di-GMP, cUAMP or cGAMP, STING1 oligomerizes, translocates from the endoplasmic reticulum and is phosphorylated by TBK1 on the pLxIS motif, leading to recruitment and subsequent activation of the transcription factor IRF3 to induce expression of type I interferon and exert a potent anti-viral state. Exhibits 2',3' phosphodiester linkage-specific ligand recognition: can bind both 2'-3' linked cGAMP (2'-3'-cGAMP) and 3'-3' linked cGAMP but is preferentially activated by 2'-3' linked cGAMP. The preference for 2'-3'-cGAMP, compared to other linkage isomers is probably due to the ligand itself, whichs adopts an organized free-ligand conformation that resembles the STING1-bound conformation and pays low energy costs in changing into the active conformation. In addition to promote the production of type I interferons, plays a direct role in autophagy. Following cGAMP-binding, STING1 buds from the endoplasmic reticulum into COPII vesicles, which then form the endoplasmic reticulum-Golgi intermediate compartment (ERGIC). The ERGIC serves as the membrane source for WIPI2 recruitment and LC3 lipidation, leading to formation of autophagosomes that target cytosolic DNA or DNA viruses for degradation by the lysosome. Promotes autophagy by acting as a proton channel that directs proton efflux from the Golgi to facilitate MAP1LC3B/LC3B lipidation. The autophagy- and interferon-inducing activities can be uncoupled and autophagy induction is independent of TBK1 phosphorylation. Autophagy is also triggered upon infection by bacteria: following c-di-GMP-binding, which is produced by live Gram-positive bacteria, promotes reticulophagy. May be involved in translocon function, the translocon possibly being able to influence the induction of type I interferons. May be involved in transduction of apoptotic signals via its association with the major histocompatibility complex class II (MHC-II). In terms of biological role, (Microbial infection) Antiviral activity is antagonized by oncoproteins, such as papillomavirus (HPV) protein E7 and adenovirus early E1A protein. Such oncoproteins prevent the ability to sense cytosolic DNA. In Homo sapiens (Human), this protein is Stimulator of interferon genes protein.